Reading from the N-terminus, the 1556-residue chain is Disco-interacting protein 2 homolog C (1556 aa).

The DMAP1-binding domain maps to 7–120 (EGMALPLEVR…PMPSKRRSLV (114 aa)). Disordered stretches follow at residues 47-157 (YLPQ…SQGS) and 170-189 (GSTT…SGAA). A compositionally biased stretch (basic and acidic residues) spans 81–93 (GSRDERYRSDVHT). Composition is skewed to polar residues over residues 120–136 (VVQT…TSSG) and 144–157 (QGDS…SQGS). Low complexity predominate over residues 170 to 183 (GSTTSTTSSSSTQS). Residue T264 is modified to Phosphothreonine.

Belongs to the DIP2 family.

In Homo sapiens (Human), this protein is Disco-interacting protein 2 homolog C (DIP2C).